Reading from the N-terminus, the 225-residue chain is Phosphoserine phosphatase (225 aa).

The residue at position 1 (Met-1) is an N-acetylmethionine. The Nucleophile role is filled by Asp-20. Residues Asp-20 and Asp-22 each contribute to the Mg(2+) site. 20-22 contributes to the L-serine binding site; the sequence is DVD. The active-site Proton donor is the Asp-22. O-phospho-L-serine is bound at residue Met-52. Residue Gly-53 participates in phosphate binding. L-serine is bound by residues 109 to 111 and Lys-158; that span reads SGG. O-phospho-L-serine is bound by residues 109 to 111 and Lys-158; that span reads SGG. Asp-179 provides a ligand contact to Mg(2+). Residue Thr-182 participates in O-phospho-L-serine binding. Thr-182 contacts phosphate.

This sequence belongs to the HAD-like hydrolase superfamily. SerB family. Homodimer. Mg(2+) serves as cofactor.

It is found in the cytoplasm. It localises to the cytosol. It carries out the reaction O-phospho-L-serine + H2O = L-serine + phosphate. The enzyme catalyses O-phospho-D-serine + H2O = D-serine + phosphate. Its pathway is amino-acid biosynthesis; L-serine biosynthesis; L-serine from 3-phospho-D-glycerate: step 3/3. Its function is as follows. Catalyzes the last irreversible step in the biosynthesis of L-serine from carbohydrates, the dephosphorylation of O-phospho-L-serine to L-serine. L-serine can then be used in protein synthesis, to produce other amino acids, in nucleotide metabolism or in glutathione synthesis, or can be racemized to D-serine, a neuromodulator. May also act on O-phospho-D-serine. The polypeptide is Phosphoserine phosphatase (Bos taurus (Bovine)).